Consider the following 283-residue polypeptide: Formamidopyrimidine-DNA glycosylase (283 aa).

The active-site Schiff-base intermediate with DNA is Pro2. Residue Glu3 is the Proton donor of the active site. Lys60 acts as the Proton donor; for beta-elimination activity in catalysis. DNA contacts are provided by His100, Arg119, and Arg164. The FPG-type zinc-finger motif lies at 249 to 283 (WVYGRENKPCRKCGVKILKAKVAGRGTHWCPNCQK). Arg273 serves as the catalytic Proton donor; for delta-elimination activity.

It belongs to the FPG family. As to quaternary structure, monomer. Requires Zn(2+) as cofactor.

It carries out the reaction Hydrolysis of DNA containing ring-opened 7-methylguanine residues, releasing 2,6-diamino-4-hydroxy-5-(N-methyl)formamidopyrimidine.. It catalyses the reaction 2'-deoxyribonucleotide-(2'-deoxyribose 5'-phosphate)-2'-deoxyribonucleotide-DNA = a 3'-end 2'-deoxyribonucleotide-(2,3-dehydro-2,3-deoxyribose 5'-phosphate)-DNA + a 5'-end 5'-phospho-2'-deoxyribonucleoside-DNA + H(+). In terms of biological role, involved in base excision repair of DNA damaged by oxidation or by mutagenic agents. Acts as a DNA glycosylase that recognizes and removes damaged bases. Has a preference for oxidized purines, such as 7,8-dihydro-8-oxoguanine (8-oxoG). Has AP (apurinic/apyrimidinic) lyase activity and introduces nicks in the DNA strand. Cleaves the DNA backbone by beta-delta elimination to generate a single-strand break at the site of the removed base with both 3'- and 5'-phosphates. The polypeptide is Formamidopyrimidine-DNA glycosylase (Prochlorococcus marinus (strain SARG / CCMP1375 / SS120)).